Consider the following 253-residue polypeptide: Imidazole glycerol phosphate synthase subunit HisF (253 aa).

Catalysis depends on residues Asp-13 and Asp-132.

Belongs to the HisA/HisF family. As to quaternary structure, heterodimer of HisH and HisF.

It is found in the cytoplasm. It carries out the reaction 5-[(5-phospho-1-deoxy-D-ribulos-1-ylimino)methylamino]-1-(5-phospho-beta-D-ribosyl)imidazole-4-carboxamide + L-glutamine = D-erythro-1-(imidazol-4-yl)glycerol 3-phosphate + 5-amino-1-(5-phospho-beta-D-ribosyl)imidazole-4-carboxamide + L-glutamate + H(+). It participates in amino-acid biosynthesis; L-histidine biosynthesis; L-histidine from 5-phospho-alpha-D-ribose 1-diphosphate: step 5/9. Its function is as follows. IGPS catalyzes the conversion of PRFAR and glutamine to IGP, AICAR and glutamate. The HisF subunit catalyzes the cyclization activity that produces IGP and AICAR from PRFAR using the ammonia provided by the HisH subunit. The polypeptide is Imidazole glycerol phosphate synthase subunit HisF (Aliarcobacter butzleri (strain RM4018) (Arcobacter butzleri)).